Consider the following 127-residue polypeptide: Small ribosomal subunit protein uS12 (127 aa).

The disordered stretch occupies residues Met-1–Pro-28. At Asp-89 the chain carries 3-methylthioaspartic acid. The disordered stretch occupies residues Ala-104–Lys-127. Positions Asn-109 to Lys-127 are enriched in basic residues.

Belongs to the universal ribosomal protein uS12 family. As to quaternary structure, part of the 30S ribosomal subunit. Contacts proteins S8 and S17. May interact with IF1 in the 30S initiation complex.

Functionally, with S4 and S5 plays an important role in translational accuracy. Interacts with and stabilizes bases of the 16S rRNA that are involved in tRNA selection in the A site and with the mRNA backbone. Located at the interface of the 30S and 50S subunits, it traverses the body of the 30S subunit contacting proteins on the other side and probably holding the rRNA structure together. The combined cluster of proteins S8, S12 and S17 appears to hold together the shoulder and platform of the 30S subunit. This is Small ribosomal subunit protein uS12 from Microcystis aeruginosa (strain NIES-843 / IAM M-2473).